The chain runs to 229 residues: MNNLKEAIKQAEHIVFLTGAGVSVPSGIPDYRSKNGLYAGMSSPEYMLSHTCLVREPEKFYQFVTENMYYPDAVPNTIHRKMAEIEADKNVTVITQNIDGLHEKAGSKKVVNFHGSLYHCYCQKCGRSVSASDYLQSDIHADCGGVVRPDVVLYEEAISESAIDQSLAAIREADLIVIVGTSFRVSPFCNLTDYRNKKARIFAVNKERISLPYPFEMIENDAVKVFAEI.

The Deacetylase sirtuin-type domain occupies 1–229 (MNNLKEAIKQ…NDAVKVFAEI (229 aa)). A20, R32, Q96, I98, D99, H114, T181, S182, N205, and V223 together coordinate NAD(+). Nicotinamide contacts are provided by I98 and D99. The active-site Proton acceptor is H114.

Belongs to the sirtuin family. Class U subfamily.

Its subcellular location is the cytoplasm. It catalyses the reaction N(6)-acetyl-L-lysyl-[protein] + NAD(+) + H2O = 2''-O-acetyl-ADP-D-ribose + nicotinamide + L-lysyl-[protein]. Functionally, NAD-dependent protein deacetylase which modulates the activities of several enzymes which are inactive in their acetylated form. In Listeria innocua serovar 6a (strain ATCC BAA-680 / CLIP 11262), this protein is NAD-dependent protein deacetylase.